A 500-amino-acid polypeptide reads, in one-letter code: Glycerol kinase (500 aa).

Threonine 11 contributes to the ADP binding site. 3 residues coordinate ATP: threonine 11, threonine 12, and serine 13. Position 11 (threonine 11) interacts with sn-glycerol 3-phosphate. Residue arginine 15 participates in ADP binding. Positions 81, 82, 133, and 242 each coordinate sn-glycerol 3-phosphate. The glycerol site is built by arginine 81, glutamate 82, tyrosine 133, aspartate 242, and glutamine 243. Positions 264 and 307 each coordinate ADP. Residues threonine 264, glycine 307, glutamine 311, and glycine 411 each coordinate ATP. ADP is bound at residue glycine 411.

The protein belongs to the FGGY kinase family.

The enzyme catalyses glycerol + ATP = sn-glycerol 3-phosphate + ADP + H(+). Its pathway is polyol metabolism; glycerol degradation via glycerol kinase pathway; sn-glycerol 3-phosphate from glycerol: step 1/1. With respect to regulation, inhibited by fructose 1,6-bisphosphate (FBP). Key enzyme in the regulation of glycerol uptake and metabolism. Catalyzes the phosphorylation of glycerol to yield sn-glycerol 3-phosphate. This chain is Glycerol kinase, found in Bradyrhizobium diazoefficiens (strain JCM 10833 / BCRC 13528 / IAM 13628 / NBRC 14792 / USDA 110).